Here is a 188-residue protein sequence, read N- to C-terminus: Pro-adrenomedullin (188 aa).

Residues 1–21 form the signal peptide; it reads MKLVPVALLYLGSLAFLGVDT. Arginine 41 carries the post-translational modification Arginine amide. The propeptide occupies 45–92; it reads ELRESSSYPTGLADVKAGPVQTLIRPQDVKGASRSPQASSPDAARIRV. Residues 69 to 89 form a disordered region; it reads RPQDVKGASRSPQASSPDAAR. Cysteine 110 and cysteine 115 are disulfide-bonded. Positions 129–175 are disordered; that stretch reads DKDKDGSAPRSKISPQGYGRRRRRSLPEAGLGRTLLQPPEPKLRGAP. A Tyrosine amide modification is found at tyrosine 146. Residues 153-188 constitute a propeptide, preproAM C-terminal fragment; the sequence is SLPEAGLGRTLLQPPEPKLRGAPDSRVHQVLATLRI.

This sequence belongs to the adrenomedullin family.

Its subcellular location is the secreted. In terms of biological role, adrenomedullin/ADM and proadrenomedullin N-20 terminal peptide/PAMP are peptide hormones that act as potent hypotensive and vasodilatator agents. Numerous actions have been reported most related to the physiologic control of fluid and electrolyte homeostasis. Its function is as follows. ADM function is mediated by the CALCRL-RAMP2 and CALCRL-RAMP3 receptor complexes with ADM showing the highest potency for the CALCRL-RAMP2 complex. The protein is Pro-adrenomedullin (ADM) of Bos taurus (Bovine).